Consider the following 252-residue polypeptide: Adenosylcobinamide-GDP ribazoletransferase (252 aa).

7 helical membrane passes run 34 to 54, 55 to 75, 113 to 133, 138 to 158, 174 to 194, 198 to 218, and 230 to 250; these read GASF…IIYK, LCII…AGIV, YACL…CSIV, LIII…AFIG, IGKW…FFLM, FIYV…FNVF, and LLGA…CVII.

This sequence belongs to the CobS family. The cofactor is Mg(2+).

Its subcellular location is the cell membrane. The enzyme catalyses alpha-ribazole + adenosylcob(III)inamide-GDP = adenosylcob(III)alamin + GMP + H(+). The catalysed reaction is alpha-ribazole 5'-phosphate + adenosylcob(III)inamide-GDP = adenosylcob(III)alamin 5'-phosphate + GMP + H(+). Its pathway is cofactor biosynthesis; adenosylcobalamin biosynthesis; adenosylcobalamin from cob(II)yrinate a,c-diamide: step 7/7. In terms of biological role, joins adenosylcobinamide-GDP and alpha-ribazole to generate adenosylcobalamin (Ado-cobalamin). Also synthesizes adenosylcobalamin 5'-phosphate from adenosylcobinamide-GDP and alpha-ribazole 5'-phosphate. The chain is Adenosylcobinamide-GDP ribazoletransferase from Clostridium kluyveri (strain NBRC 12016).